The primary structure comprises 78 residues: Beta-defensin 105A (78 aa).

Residues Met1–Ala27 form the signal peptide. Disulfide bonds link Cys46-Cys74, Cys53-Cys67, and Cys57-Cys73.

The protein belongs to the beta-defensin family.

It is found in the secreted. In terms of biological role, has antimicrobial activity. The sequence is that of Beta-defensin 105A (DEFB105A) from Hylobates lar (Lar gibbon).